We begin with the raw amino-acid sequence, 673 residues long: ATP-dependent DNA helicase Rep (673 aa).

The region spanning 1–280 (MRLNPGQQQA…IKLEQNYRSS (280 aa)) is the UvrD-like helicase ATP-binding domain. ATP contacts are provided by residues 22-29 (AGAGSGKT) and Arg278. In terms of domain architecture, UvrD-like helicase C-terminal spans 281–562 (GRILKAANIL…QLMTLHASKG (282 aa)).

The protein belongs to the helicase family. UvrD subfamily. In terms of assembly, homodimer in association with DNA.

It carries out the reaction Couples ATP hydrolysis with the unwinding of duplex DNA by translocating in the 3'-5' direction.. The catalysed reaction is ATP + H2O = ADP + phosphate + H(+). Binding to DNA induces dimerization, which is required for DNA helicase activity. Helicase activity is stimulated by PriC. Functionally, rep helicase is a single-stranded (ss)DNA-dependent ATPase involved in DNA replication; it can initiate unwinding at a nick in the DNA. It binds to ssDNA and acts in a progressive fashion along the DNA in the 3' to 5' direction. Binds double-stranded (ds)DNA with a 5' ss- but not 3' ss-extension and forked structures with either lagging or leading ssDNA. Part of the PriC-Rep pathway for restart of stalled replication forks, which reloads the DnaB replicative helicase on sites other than the origin of replication. This is ATP-dependent DNA helicase Rep from Escherichia coli (strain K12).